Reading from the N-terminus, the 769-residue chain is Zinc finger protein 585B (769 aa).

Residues Met1–Ser12 show a composition bias toward polar residues. The tract at residues Met1 to Tyr23 is disordered. The KRAB domain maps to Val27–Pro97. C2H2-type zinc fingers lie at residues Tyr158–His180, Tyr186–His208, Tyr214–His236, His242–His264, Tyr270–His292, Tyr298–His320, Ser354–His376, Tyr382–His404, Tyr410–His432, Tyr438–His460, Tyr466–His488, Tyr494–His516, Tyr522–His544, Tyr550–His572, Tyr578–His600, Tyr606–His628, Tyr634–His656, Tyr662–His684, Tyr690–His712, Tyr718–His740, and Tyr746–His768.

This sequence belongs to the krueppel C2H2-type zinc-finger protein family.

Its subcellular location is the nucleus. In terms of biological role, may be involved in transcriptional regulation. This chain is Zinc finger protein 585B (ZNF585B), found in Pongo abelii (Sumatran orangutan).